Consider the following 70-residue polypeptide: uncharacterized protein (70 aa).

The protein belongs to the opacity porin family.

This is an uncharacterized protein from Haemophilus influenzae (strain ATCC 51907 / DSM 11121 / KW20 / Rd).